The chain runs to 504 residues: ATP synthase subunit alpha (504 aa).

169-176 (GDRKTGKT) is an ATP binding site.

It belongs to the ATPase alpha/beta chains family. F-type ATPases have 2 components, CF(1) - the catalytic core - and CF(0) - the membrane proton channel. CF(1) has five subunits: alpha(3), beta(3), gamma(1), delta(1), epsilon(1). CF(0) has three main subunits: a(1), b(2) and c(9-12). The alpha and beta chains form an alternating ring which encloses part of the gamma chain. CF(1) is attached to CF(0) by a central stalk formed by the gamma and epsilon chains, while a peripheral stalk is formed by the delta and b chains.

Its subcellular location is the cell membrane. It catalyses the reaction ATP + H2O + 4 H(+)(in) = ADP + phosphate + 5 H(+)(out). Functionally, produces ATP from ADP in the presence of a proton gradient across the membrane. The alpha chain is a regulatory subunit. The sequence is that of ATP synthase subunit alpha from Lactiplantibacillus plantarum (strain ATCC BAA-793 / NCIMB 8826 / WCFS1) (Lactobacillus plantarum).